A 225-amino-acid chain; its full sequence is tRNA (guanine-N(1)-)-methyltransferase (225 aa).

S-adenosyl-L-methionine contacts are provided by residues Gly112 and 132-137; that span reads IGDYVL.

The protein belongs to the RNA methyltransferase TrmD family. In terms of assembly, homodimer.

Its subcellular location is the cytoplasm. It carries out the reaction guanosine(37) in tRNA + S-adenosyl-L-methionine = N(1)-methylguanosine(37) in tRNA + S-adenosyl-L-homocysteine + H(+). Its function is as follows. Specifically methylates guanosine-37 in various tRNAs. This Bacteroides fragilis (strain ATCC 25285 / DSM 2151 / CCUG 4856 / JCM 11019 / LMG 10263 / NCTC 9343 / Onslow / VPI 2553 / EN-2) protein is tRNA (guanine-N(1)-)-methyltransferase.